Here is a 360-residue protein sequence, read N- to C-terminus: D-alanine--D-alanine ligase (360 aa).

The 205-residue stretch at 149–353 (KKLMAAEGLP…YEELLDVLVQ (205 aa)) folds into the ATP-grasp domain. 176-231 (KNLLGLPVFVKPARGGSSIGISRVTAWEDFNKAVGLARAHDEKVIVESEIVGSEVE) provides a ligand contact to ATP. Asp-308, Glu-320, and Asn-322 together coordinate Mg(2+).

The protein belongs to the D-alanine--D-alanine ligase family. Mg(2+) is required as a cofactor. It depends on Mn(2+) as a cofactor.

It localises to the cytoplasm. The catalysed reaction is 2 D-alanine + ATP = D-alanyl-D-alanine + ADP + phosphate + H(+). The protein operates within cell wall biogenesis; peptidoglycan biosynthesis. In terms of biological role, cell wall formation. This chain is D-alanine--D-alanine ligase, found in Corynebacterium glutamicum (strain R).